The sequence spans 343 residues: tRNA N6-adenosine threonylcarbamoyltransferase (343 aa).

Fe cation contacts are provided by His-111 and His-115. Substrate is bound by residues 134 to 138, Asp-167, Gly-180, and Asn-276; that span reads LVSGG. Asp-304 is a Fe cation binding site.

It belongs to the KAE1 / TsaD family. Fe(2+) is required as a cofactor.

The protein localises to the cytoplasm. It catalyses the reaction L-threonylcarbamoyladenylate + adenosine(37) in tRNA = N(6)-L-threonylcarbamoyladenosine(37) in tRNA + AMP + H(+). In terms of biological role, required for the formation of a threonylcarbamoyl group on adenosine at position 37 (t(6)A37) in tRNAs that read codons beginning with adenine. Is involved in the transfer of the threonylcarbamoyl moiety of threonylcarbamoyl-AMP (TC-AMP) to the N6 group of A37, together with TsaE and TsaB. TsaD likely plays a direct catalytic role in this reaction. This Chromohalobacter salexigens (strain ATCC BAA-138 / DSM 3043 / CIP 106854 / NCIMB 13768 / 1H11) protein is tRNA N6-adenosine threonylcarbamoyltransferase.